Consider the following 275-residue polypeptide: Coagulation factor IX (275 aa).

Residue Tyr23 is modified to Sulfotyrosine. N-linked (GlcNAc...) asparagine glycosylation occurs at Asn25. The residue at position 27 (Thr27) is a Phosphothreonine. N-linked (GlcNAc...) asparagine glycosylation occurs at Asn35. Thr47 carries O-linked (GalNAc...) threonine glycosylation. In terms of domain architecture, Peptidase S1 spans 49–275 (IVGGENAKPG…YTRVSWYVNW (227 aa)). Cys74 and Cys90 are disulfide-bonded. The active-site Charge relay system is the His89. Asn96 carries an N-linked (GlcNAc...) asparagine glycan. Ca(2+) contacts are provided by Glu103, Asn105, Glu108, Glu110, and Glu113. The N-linked (GlcNAc...) asparagine glycan is linked to Asn128. Asp137 (charge relay system) is an active-site residue. Intrachain disulfides connect Cys204-Cys218 and Cys229-Cys257. Ser233 functions as the Charge relay system in the catalytic mechanism.

Belongs to the peptidase S1 family. Heterodimer of a light chain and a heavy chain; disulfide-linked. Interacts (inactive and activated) with F11 (activated) in calcium-dependent manner. Interacts with SERPINC1. Activated by factor XIa, which excises the activation peptide. The propeptide can also be removed by snake venom protease. Activated by coagulation factor VIIa-tissue factor (F7-F3) complex in calcium-dependent manner.

Its subcellular location is the secreted. It catalyses the reaction Selective cleavage of Arg-|-Ile bond in factor X to form factor Xa.. Factor IX is a vitamin K-dependent plasma protein that participates in the intrinsic pathway of blood coagulation by converting factor X to its active form in the presence of Ca(2+) ions, phospholipids, and factor VIIIa. The chain is Coagulation factor IX (F9) from Oryctolagus cuniculus (Rabbit).